The sequence spans 707 residues: Casein kinase 1-like protein HD16 (707 aa).

The disordered stretch occupies residues 19 to 67 (YDVQDADPAASPVSPAPRGRTGRRGGAAAGRGNKTVAEGGGRKALKPRG). A compositionally biased stretch (low complexity) spans 24–37 (ADPAASPVSPAPRG). One can recognise a Protein kinase domain in the interval 147–425 (YITDRKLGKG…KLISLFDGLI (279 aa)). Residues 153-161 (LGKGGFGQV) and Lys184 contribute to the ATP site. Asp276 functions as the Proton acceptor in the catalytic mechanism.

This sequence belongs to the protein kinase superfamily. CK1 Ser/Thr protein kinase family. Casein kinase I subfamily. As to quaternary structure, monomer. Interacts with GHD7 (via C-terminus). Interacts with SLR1. Autophosphorylated. In terms of tissue distribution, expressed in roots, leaves and stems. Expressed in leaf vascular bundles, and proximal regions of the shoot and roots.

The protein resides in the cytoplasm. Its subcellular location is the nucleus. The enzyme catalyses L-seryl-[protein] + ATP = O-phospho-L-seryl-[protein] + ADP + H(+). The catalysed reaction is L-threonyl-[protein] + ATP = O-phospho-L-threonyl-[protein] + ADP + H(+). Functionally, casein kinases are operationally defined by their preferential utilization of acidic proteins such as caseins as substrates. It can phosphorylate a large number of proteins. Can phosphorylate casein on threonine residues in vitro. Involved in the regulation of flowering time through gibberellin (GA) signaling, and independently of photoperiod. Phosphorylates the DELLA protein SLR1, stabilizing SLR1 protein and sustaining SLR1 activity as repressor of GA signaling. Required for normal development of male floral organs and grains, through modulation of GA signaling. Targeted and repressed by the homeobox protein HAZ1 during GA signaling. Can phosphorylate phosvitin and SLR1 in vitro. Is not required for clock function in either the presence or the absence of light signals. Involved in a genetic control pathway for photoperiodic flowering under long day (LD) conditions that includes HD1, GHD7, HD5 and HD2. Phosphorylates and activates GHD7, a major floral repressor under LD conditions. Phosphorylation of GHD7 enhances its function in the repression of EHD1, HD3A and HD3B/RFT1, and obviously delaying flowering. In Oryza sativa subsp. japonica (Rice), this protein is Casein kinase 1-like protein HD16.